Consider the following 334-residue polypeptide: G-protein coupled receptor 12 (334 aa).

Residues 1-48 (MNEDPKVNLSGLPRDCIEAGTPENISAAVPSQGSVVESEPELVVNPWD) lie on the Extracellular side of the membrane. N-linked (GlcNAc...) asparagine glycosylation is found at Asn8 and Asn24. Residues 49–69 (IVLCSSGTLICCENAVVVLII) traverse the membrane as a helical segment. Residues 70 to 78 (FHSPSLRAP) lie on the Cytoplasmic side of the membrane. A helical transmembrane segment spans residues 79–99 (MFLLIGSLALADLLAGLGLII). The Extracellular portion of the chain corresponds to 100-113 (NFVFAYLLQSEATK). The helical transmembrane segment at 114-134 (LVTIGLIVASFSASVCSLLAI) threads the bilayer. Residues 135–158 (TVDRYLSLYYALTYHSERTVTFTY) lie on the Cytoplasmic side of the membrane. A helical transmembrane segment spans residues 159–179 (VMLVMLWGTSTCLGLLPVMGW). Residues 180–199 (NCLRDESTCSVVRPLTKNNA) are Extracellular-facing. Residues 200-220 (AILSISFLFMFALMLQLYIQI) form a helical membrane-spanning segment. The Cytoplasmic segment spans residues 221–252 (CKIVMRHAHQIALQHHFLATSHYVTTRKGIST). A helical transmembrane segment spans residues 253–273 (LALILGTFAACWMPFTLYSLI). Residues 274–282 (ADYTYPSIY) lie on the Extracellular side of the membrane. Residues 283 to 303 (TYATLLPATYNSIINPVIYAF) form a helical membrane-spanning segment. Topologically, residues 304 to 334 (RNQEIQKALCLICCGCIPNTLSQRARSPSDV) are cytoplasmic. Cys317 carries the S-palmitoyl cysteine lipid modification. Phosphoserine occurs at positions 330 and 332.

This sequence belongs to the G-protein coupled receptor 1 family. Expressed in the brain, pituitary gland and testis.

Its subcellular location is the cell membrane. In terms of biological role, receptor with constitutive G(s) signaling activity that activates cyclic AMP. Promotes neurite outgrowth and blocks myelin inhibition in neurons. This Rattus norvegicus (Rat) protein is G-protein coupled receptor 12 (Gpr12).